The chain runs to 311 residues: Aspartate carbamoyltransferase catalytic subunit (311 aa).

2 residues coordinate carbamoyl phosphate: Arg58 and Thr59. Lys86 is an L-aspartate binding site. Carbamoyl phosphate-binding residues include Arg108, His136, and Gln139. L-aspartate-binding residues include Arg169 and Arg223. Carbamoyl phosphate-binding residues include Gly264 and Pro265.

The protein belongs to the aspartate/ornithine carbamoyltransferase superfamily. ATCase family. Heterododecamer (2C3:3R2) of six catalytic PyrB chains organized as two trimers (C3), and six regulatory PyrI chains organized as three dimers (R2).

The catalysed reaction is carbamoyl phosphate + L-aspartate = N-carbamoyl-L-aspartate + phosphate + H(+). It functions in the pathway pyrimidine metabolism; UMP biosynthesis via de novo pathway; (S)-dihydroorotate from bicarbonate: step 2/3. In terms of biological role, catalyzes the condensation of carbamoyl phosphate and aspartate to form carbamoyl aspartate and inorganic phosphate, the committed step in the de novo pyrimidine nucleotide biosynthesis pathway. The polypeptide is Aspartate carbamoyltransferase catalytic subunit (Ruegeria pomeroyi (strain ATCC 700808 / DSM 15171 / DSS-3) (Silicibacter pomeroyi)).